We begin with the raw amino-acid sequence, 235 residues long: MRFGILVFPGTNCEMETFYVLREVVGVQADYVWHEARDLTPYDAVVIPGGFTYGDRVRSGALACRAPVMEAVAEFAARGGLVLGICNGFQILTEAGLLPGGFRPNAHGRYRCGWSRVRVENAATPFTLACRPGQVLKIPVSHGMGNYQADPDTLRALSENQQVLFRYCTPEGAVTPGANPNGSAENIAGIVNRTGNVAGVMPHPERATEQVLGSADGRLLFASMVQHLTGRVIRV.

A Glutamine amidotransferase type-1 domain is found at 4–234; that stretch reads GILVFPGTNC…VQHLTGRVIR (231 aa). Cys-86 serves as the catalytic Nucleophile. Active-site residues include His-203 and Glu-205.

As to quaternary structure, part of the FGAM synthase complex composed of 1 PurL, 1 PurQ and 2 PurS subunits.

The protein resides in the cytoplasm. It catalyses the reaction N(2)-formyl-N(1)-(5-phospho-beta-D-ribosyl)glycinamide + L-glutamine + ATP + H2O = 2-formamido-N(1)-(5-O-phospho-beta-D-ribosyl)acetamidine + L-glutamate + ADP + phosphate + H(+). It carries out the reaction L-glutamine + H2O = L-glutamate + NH4(+). It participates in purine metabolism; IMP biosynthesis via de novo pathway; 5-amino-1-(5-phospho-D-ribosyl)imidazole from N(2)-formyl-N(1)-(5-phospho-D-ribosyl)glycinamide: step 1/2. In terms of biological role, part of the phosphoribosylformylglycinamidine synthase complex involved in the purines biosynthetic pathway. Catalyzes the ATP-dependent conversion of formylglycinamide ribonucleotide (FGAR) and glutamine to yield formylglycinamidine ribonucleotide (FGAM) and glutamate. The FGAM synthase complex is composed of three subunits. PurQ produces an ammonia molecule by converting glutamine to glutamate. PurL transfers the ammonia molecule to FGAR to form FGAM in an ATP-dependent manner. PurS interacts with PurQ and PurL and is thought to assist in the transfer of the ammonia molecule from PurQ to PurL. In Symbiobacterium thermophilum (strain DSM 24528 / JCM 14929 / IAM 14863 / T), this protein is Phosphoribosylformylglycinamidine synthase subunit PurQ.